Consider the following 456-residue polypeptide: Ribonuclease inhibitor (456 aa).

Methionine 1 is subject to N-acetylmethionine. 15 LRR repeats span residues 15-43 (WTELLPLLQQYEVVRLDDCGLTEEHCKDI), 44-71 (GSALRANPSLTELCLRTNELGDAGVHLV), 72-100 (LQGLQSPTCKIQKLSLQNCSLTEAGCGVL), 101-128 (PSTLRSLPTLRELHLSDNPLGDAGLRLL), 129-157 (CEGLLDPQCHLEKLQLEYCRLTAASCEPL), 158-185 (ASVLRATRALKELTVSNNDIGEAGARVL), 186-214 (GQGLADSACQLETLRLENCGLTPANCKDL), 215-242 (CGIVASQASLRELDLGSNGLGDAGIAEL), 243-271 (CPGLLSPASRLKTLWLWECDITASGCRDL), 272-299 (CRVLQAKETLKELSLAGNKLGDEGARLL), 300-328 (CESLLQPGCQLESLWVKSCSLTAACCQHV), 329-356 (SLMLTQNKHLLELQLSSNKLGDSGIQEL), 357-385 (CQALSQPGTTLRVLCLGDCEVTNSGCSSL), 386-413 (ASLLLANRSLRELDLSNNCVGDPGVLQL), and 414-442 (LGSLEQPGCALEQLVLYDTYWTEEVEDRL). The residue at position 86 (serine 86) is a Phosphoserine.

As to quaternary structure, forms high-affinity heterodimers with RNASE1, ANG and RNASE2.

It is found in the cytoplasm. The protein resides in the nucleus. In terms of biological role, ribonuclease inhibitor which inhibits RNASE1, RNASE2 and angiogenin (ANG). May play a role in redox homeostasis. Required to inhibit the cytotoxic tRNA ribonuclease activity of ANG in the cytoplasm in absence of stress. Relocates to the nucleus in response to stress, relieving inhibition of ANG in the cytoplasm, and inhibiting the angiogenic activity of ANG in the nucleus. The chain is Ribonuclease inhibitor (RNH1) from Sus scrofa (Pig).